The sequence spans 344 residues: UDP-3-O-acylglucosamine N-acyltransferase (344 aa).

His-248 serves as the catalytic Proton acceptor.

The protein belongs to the transferase hexapeptide repeat family. LpxD subfamily. In terms of assembly, homotrimer.

It catalyses the reaction a UDP-3-O-[(3R)-3-hydroxyacyl]-alpha-D-glucosamine + a (3R)-hydroxyacyl-[ACP] = a UDP-2-N,3-O-bis[(3R)-3-hydroxyacyl]-alpha-D-glucosamine + holo-[ACP] + H(+). Its pathway is bacterial outer membrane biogenesis; LPS lipid A biosynthesis. In terms of biological role, catalyzes the N-acylation of UDP-3-O-acylglucosamine using 3-hydroxyacyl-ACP as the acyl donor. Is involved in the biosynthesis of lipid A, a phosphorylated glycolipid that anchors the lipopolysaccharide to the outer membrane of the cell. The chain is UDP-3-O-acylglucosamine N-acyltransferase from Synechocystis sp. (strain ATCC 27184 / PCC 6803 / Kazusa).